The sequence spans 112 residues: Protein preY, mitochondrial (112 aa).

The transit peptide at 1–34 (MLTTTCRRLSQALQRPHALSAVAQRCLRAPGARS) directs the protein to the mitochondrion. The TRM112 domain maps to 49–95 (HPALLQFLVCPLSKKPLRYDASTNELINDELGIAYPIIDGVPNMIPQ).

It belongs to the PREY family. As to quaternary structure, interacts (via TRM112 domain) with NDUFAF5; the interaction is direct and stabilizes NDUFAF5 protein. Interacts with COQ5; the interaction is direct, stabilizes COQ5 protein and associates PYURF with COQ enzyme complex.

The protein resides in the mitochondrion. Its function is as follows. In mitochondria, S-adenosylmethionine-dependent methyltransferase chaperone that supports both coenzyme Q biosynthesis, by stabilizing its components, such as COQ5, and NADH:ubiquinone oxidoreductase complex (complex I, MT-ND1) assembly, by stabilizing complex I assembly factors, such as NDUFAF5. The sequence is that of Protein preY, mitochondrial (Pyurf) from Rattus norvegicus (Rat).